The sequence spans 363 residues: Probable L-tyrosine/L-aspartate decarboxylase (363 aa).

Lysine 224 is modified (N6-(pyridoxal phosphate)lysine).

It belongs to the group II decarboxylase family. MfnA subfamily. Requires pyridoxal 5'-phosphate as cofactor.

The catalysed reaction is L-tyrosine + H(+) = tyramine + CO2. It carries out the reaction L-aspartate + H(+) = beta-alanine + CO2. The protein operates within cofactor biosynthesis; methanofuran biosynthesis. It functions in the pathway cofactor biosynthesis; coenzyme A biosynthesis. Functionally, catalyzes the decarboxylation of L-tyrosine to produce tyramine for methanofuran biosynthesis. Can also catalyze the decarboxylation of L-aspartate to produce beta-alanine for coenzyme A (CoA) biosynthesis. In Methanosphaerula palustris (strain ATCC BAA-1556 / DSM 19958 / E1-9c), this protein is Probable L-tyrosine/L-aspartate decarboxylase.